The chain runs to 460 residues: uncharacterized protein (460 aa).

A TRAM domain is found at 6–64 (PVKKNNDYEIYIDDFGNMGEGIGKIDNFTVFVKDAVKGEKVRAKIIKVNKSFAIGKLID). Residues C77, C83, C86, and C166 each contribute to the [4Fe-4S] cluster site. 4 residues coordinate S-adenosyl-L-methionine: Q290, Y319, E340, and D388. Residue C415 is the Nucleophile of the active site.

This sequence belongs to the class I-like SAM-binding methyltransferase superfamily. RNA M5U methyltransferase family.

This is an uncharacterized protein from Clostridium acetobutylicum (strain ATCC 824 / DSM 792 / JCM 1419 / IAM 19013 / LMG 5710 / NBRC 13948 / NRRL B-527 / VKM B-1787 / 2291 / W).